A 577-amino-acid polypeptide reads, in one-letter code: Protein O-linked-mannose beta-1,4-N-acetylglucosaminyltransferase 2 (577 aa).

Residues 1-4 (MNIA) are Cytoplasmic-facing. The chain crosses the membrane as a helical; Signal-anchor for type II membrane protein span at residues 5–25 (AVFNALLVSVLATVLWKYIKL). Residues 26-577 (REHAFMVEEE…PFADVLLCST (552 aa)) lie on the Lumenal side of the membrane. N-linked (GlcNAc...) asparagine glycosylation is found at asparagine 98, asparagine 275, asparagine 335, and asparagine 540. In terms of domain architecture, Fibronectin type-III spans 481 to 577 (KVRDARCQAS…PFADVLLCST (97 aa)).

This sequence belongs to the glycosyltransferase 61 family.

It localises to the endoplasmic reticulum membrane. It catalyses the reaction 3-O-(alpha-D-mannosyl)-L-threonyl-[protein] + UDP-N-acetyl-alpha-D-glucosamine = 3-O-(N-acetyl-beta-D-glucosaminyl-(1-&gt;4)-alpha-D-mannosyl)-L-threonyl-[protein] + UDP + H(+). Its pathway is protein modification; protein glycosylation. In terms of biological role, O-linked mannose beta-1,4-N-acetylglucosaminyltransferase that transfers UDP-N-acetyl-D-glucosamine to the 4-position of the mannose to generate N-acetyl-D-glucosamine-beta-1,4-O-D-mannosylprotein. Involved in the biosynthesis of the phosphorylated O-mannosyl trisaccharide (N-acetylgalactosamine-beta-3-N-acetylglucosamine-beta-4-(phosphate-6-)mannose), a carbohydrate structure present in alpha-dystroglycan (DAG1), which is required for binding laminin G-like domain-containing extracellular proteins with high affinity. The chain is Protein O-linked-mannose beta-1,4-N-acetylglucosaminyltransferase 2 (POMGNT2) from Gallus gallus (Chicken).